The primary structure comprises 183 residues: (2E)-enoyl-[ACP] glycyltransferase (183 aa).

The protein belongs to the FcoT family.

It carries out the reaction a (3R)-3-[(carboxymethyl)amino]fatty acid + holo-[ACP] + H(+) = a (2E)-enoyl-[ACP] + glycine + H2O. The catalysed reaction is (3R)-3-[(carboxylmethyl)amino]decanoate + holo-[ACP] + H(+) = (2E)-decenoyl-[ACP] + glycine + H2O. The enzyme catalyses a fatty acyl-CoA + H2O = a fatty acid + CoA + H(+). In terms of biological role, involved in the biosynthesis of a unique class of isonitrile lipopeptides (INLPs) that seem to play a role in metal acquisition. Catalyzes a Michael addition of glycine to the beta-position of an alpha,beta-unsaturated fatty acyl-[ACP], producing a (3R)-3-[(carboxymethyl)amino]fatty acid. Acts on the (2E)-decenoyl moiety loaded on the acyl-carrier protein (ACP) BQ2027_MB0103, forming the product (3R)-3-[(carboxymethyl)amino]decanoate released from the ACP. Displays thioesterase activity with a preference for long chain fatty acyl groups. The polypeptide is (2E)-enoyl-[ACP] glycyltransferase (Mycobacterium bovis (strain ATCC BAA-935 / AF2122/97)).